Reading from the N-terminus, the 95-residue chain is Histone-like DNA-binding protein (95 aa).

Belongs to the bacterial histone-like protein family.

The protein is Histone-like DNA-binding protein of Rickettsia typhi (strain ATCC VR-144 / Wilmington).